Reading from the N-terminus, the 325-residue chain is Lipoyl synthase (325 aa).

Positions 68, 73, 79, 94, 98, 101, and 308 each coordinate [4Fe-4S] cluster. Residues 80-297 (FGGGTATFMI…ARVANELGFT (218 aa)) enclose the Radical SAM core domain.

Belongs to the radical SAM superfamily. Lipoyl synthase family. [4Fe-4S] cluster serves as cofactor.

Its subcellular location is the cytoplasm. The enzyme catalyses [[Fe-S] cluster scaffold protein carrying a second [4Fe-4S](2+) cluster] + N(6)-octanoyl-L-lysyl-[protein] + 2 oxidized [2Fe-2S]-[ferredoxin] + 2 S-adenosyl-L-methionine + 4 H(+) = [[Fe-S] cluster scaffold protein] + N(6)-[(R)-dihydrolipoyl]-L-lysyl-[protein] + 4 Fe(3+) + 2 hydrogen sulfide + 2 5'-deoxyadenosine + 2 L-methionine + 2 reduced [2Fe-2S]-[ferredoxin]. It functions in the pathway protein modification; protein lipoylation via endogenous pathway; protein N(6)-(lipoyl)lysine from octanoyl-[acyl-carrier-protein]: step 2/2. Its function is as follows. Catalyzes the radical-mediated insertion of two sulfur atoms into the C-6 and C-8 positions of the octanoyl moiety bound to the lipoyl domains of lipoate-dependent enzymes, thereby converting the octanoylated domains into lipoylated derivatives. This Alcanivorax borkumensis (strain ATCC 700651 / DSM 11573 / NCIMB 13689 / SK2) protein is Lipoyl synthase.